Consider the following 810-residue polypeptide: Phenylalanine--tRNA ligase beta subunit (810 aa).

One can recognise a tRNA-binding domain in the interval 39–150 (RTWANGVVVG…ENLPLGSDVR (112 aa)). Residues 411–495 (TWSRSIFLRL…RLYGYDNFCD (85 aa)) form the B5 domain. The Mg(2+) site is built by aspartate 473, aspartate 479, glutamate 482, and glutamate 483. The FDX-ACB domain occupies 716-809 (STYPASDRDI…LVEKFGVNLR (94 aa)).

The protein belongs to the phenylalanyl-tRNA synthetase beta subunit family. Type 1 subfamily. Tetramer of two alpha and two beta subunits. Mg(2+) is required as a cofactor.

It is found in the cytoplasm. The enzyme catalyses tRNA(Phe) + L-phenylalanine + ATP = L-phenylalanyl-tRNA(Phe) + AMP + diphosphate + H(+). This Trichormus variabilis (strain ATCC 29413 / PCC 7937) (Anabaena variabilis) protein is Phenylalanine--tRNA ligase beta subunit.